The sequence spans 274 residues: Putative pyruvate, phosphate dikinase regulatory protein 1 (274 aa).

Position 149–156 (149–156 (GISRTSKT)) interacts with ADP.

Belongs to the pyruvate, phosphate/water dikinase regulatory protein family. PDRP subfamily.

The enzyme catalyses N(tele)-phospho-L-histidyl/L-threonyl-[pyruvate, phosphate dikinase] + ADP = N(tele)-phospho-L-histidyl/O-phospho-L-threonyl-[pyruvate, phosphate dikinase] + AMP + H(+). It catalyses the reaction N(tele)-phospho-L-histidyl/O-phospho-L-threonyl-[pyruvate, phosphate dikinase] + phosphate + H(+) = N(tele)-phospho-L-histidyl/L-threonyl-[pyruvate, phosphate dikinase] + diphosphate. Bifunctional serine/threonine kinase and phosphorylase involved in the regulation of the pyruvate, phosphate dikinase (PPDK) by catalyzing its phosphorylation/dephosphorylation. The polypeptide is Putative pyruvate, phosphate dikinase regulatory protein 1 (Listeria monocytogenes serotype 4b (strain F2365)).